Reading from the N-terminus, the 70-residue chain is Cold shock-like protein CspG (70 aa).

The 61-residue stretch at 7 to 67 folds into the CSD domain; the sequence is GLVKWFNEEK…GQKGLQAANV (61 aa).

Its subcellular location is the cytoplasm. In Shewanella violacea (strain JCM 10179 / CIP 106290 / LMG 19151 / DSS12), this protein is Cold shock-like protein CspG (cspG).